The primary structure comprises 92 residues: Co-chaperonin GroES (92 aa).

This sequence belongs to the GroES chaperonin family. Heptamer of 7 subunits arranged in a ring. Interacts with the chaperonin GroEL.

Its subcellular location is the cytoplasm. Together with the chaperonin GroEL, plays an essential role in assisting protein folding. The GroEL-GroES system forms a nano-cage that allows encapsulation of the non-native substrate proteins and provides a physical environment optimized to promote and accelerate protein folding. GroES binds to the apical surface of the GroEL ring, thereby capping the opening of the GroEL channel. This chain is Co-chaperonin GroES, found in Methanosarcina barkeri (strain Fusaro / DSM 804).